The sequence spans 104 residues: Large ribosomal subunit protein bL21 (104 aa).

The protein belongs to the bacterial ribosomal protein bL21 family. In terms of assembly, part of the 50S ribosomal subunit. Contacts protein L20.

Its function is as follows. This protein binds to 23S rRNA in the presence of protein L20. This is Large ribosomal subunit protein bL21 from Acidiphilium cryptum (strain JF-5).